The chain runs to 195 residues: ATP-dependent Clp protease proteolytic subunit (195 aa).

The active-site Nucleophile is Ser-99. The active site involves His-124.

It belongs to the peptidase S14 family. Fourteen ClpP subunits assemble into 2 heptameric rings which stack back to back to give a disk-like structure with a central cavity, resembling the structure of eukaryotic proteasomes.

The protein localises to the cytoplasm. The catalysed reaction is Hydrolysis of proteins to small peptides in the presence of ATP and magnesium. alpha-casein is the usual test substrate. In the absence of ATP, only oligopeptides shorter than five residues are hydrolyzed (such as succinyl-Leu-Tyr-|-NHMec, and Leu-Tyr-Leu-|-Tyr-Trp, in which cleavage of the -Tyr-|-Leu- and -Tyr-|-Trp bonds also occurs).. Functionally, cleaves peptides in various proteins in a process that requires ATP hydrolysis. Has a chymotrypsin-like activity. Plays a major role in the degradation of misfolded proteins. The protein is ATP-dependent Clp protease proteolytic subunit of Coxiella burnetii (strain RSA 331 / Henzerling II).